The chain runs to 333 residues: Acetyl-coenzyme A carboxylase carboxyl transferase subunit alpha (333 aa).

In terms of domain architecture, CoA carboxyltransferase C-terminal spans 48-308; the sequence is ALEVKVETLR…KEMLIEELRI (261 aa).

The protein belongs to the AccA family. As to quaternary structure, acetyl-CoA carboxylase is a heterohexamer composed of biotin carboxyl carrier protein (AccB), biotin carboxylase (AccC) and two subunits each of ACCase subunit alpha (AccA) and ACCase subunit beta (AccD).

It is found in the cytoplasm. It catalyses the reaction N(6)-carboxybiotinyl-L-lysyl-[protein] + acetyl-CoA = N(6)-biotinyl-L-lysyl-[protein] + malonyl-CoA. It participates in lipid metabolism; malonyl-CoA biosynthesis; malonyl-CoA from acetyl-CoA: step 1/1. Functionally, component of the acetyl coenzyme A carboxylase (ACC) complex. First, biotin carboxylase catalyzes the carboxylation of biotin on its carrier protein (BCCP) and then the CO(2) group is transferred by the carboxyltransferase to acetyl-CoA to form malonyl-CoA. This chain is Acetyl-coenzyme A carboxylase carboxyl transferase subunit alpha, found in Chlorobium phaeobacteroides (strain DSM 266 / SMG 266 / 2430).